Consider the following 952-residue polypeptide: Lysosomal alpha-glucosidase (952 aa).

Positions 1–27 are cleaved as a signal peptide; that stretch reads MGVRHPPCSHRLLAVCALVSLATAALL. A propeptide spanning residues 28-69 is cleaved from the precursor; sequence GHILLHDFLLVPRELSGSSPVLEETHPAHQQGASRPGPRDAQ. The disordered stretch occupies residues 47-82; sequence PVLEETHPAHQQGASRPGPRDAQAHPGRPRAVPTQC. Positions 80–131 constitute a P-type domain; it reads TQCDVPPNSRFDCAPDKAITQEQCEARGCCYIPAKQGLQGAQMGQPWCFFPP. 3 disulfides stabilise this stretch: cysteine 82-cysteine 109, cysteine 92-cysteine 108, and cysteine 103-cysteine 127. 3 N-linked (GlcNAc...) asparagine glycosylation sites follow: asparagine 140, asparagine 233, and asparagine 390. Substrate is bound at residue aspartate 404. N-linked (GlcNAc...) asparagine glycosylation occurs at asparagine 470. The active-site Nucleophile is aspartate 518. Residue glutamate 521 is part of the active site. Residues cysteine 533 and cysteine 558 are joined by a disulfide bond. Arginine 600 and aspartate 616 together coordinate substrate. Cysteine 647 and cysteine 658 are joined by a disulfide. N-linked (GlcNAc...) asparagine glycosylation is present at asparagine 652. Histidine 674 lines the substrate pocket. Residues asparagine 882 and asparagine 925 are each glycosylated (N-linked (GlcNAc...) asparagine).

It belongs to the glycosyl hydrolase 31 family. Post-translationally, the different forms of acid glucosidase are obtained by proteolytic processing. Phosphorylation of mannose residues ensures efficient transport of the enzyme to the lysosomes via the mannose 6-phosphate receptor.

It localises to the lysosome. The protein localises to the lysosome membrane. The enzyme catalyses Hydrolysis of terminal, non-reducing (1-&gt;4)-linked alpha-D-glucose residues with release of alpha-D-glucose.. Its function is as follows. Essential for the degradation of glycogen in lysosomes. Has highest activity on alpha-1,4-linked glycosidic linkages, but can also hydrolyze alpha-1,6-linked glucans. The polypeptide is Lysosomal alpha-glucosidase (GAA) (Homo sapiens (Human)).